Here is a 431-residue protein sequence, read N- to C-terminus: Peptidase B (431 aa).

Lys-196 and Asp-201 together coordinate Mn(2+). Lys-208 is an active-site residue. Residues Asp-219, Asp-278, and Glu-280 each coordinate Mn(2+). Arg-282 is a catalytic residue.

It belongs to the peptidase M17 family. In terms of assembly, homohexamer. The cofactor is Mn(2+).

The protein localises to the cytoplasm. The enzyme catalyses Release of an N-terminal amino acid, Xaa, from a peptide or arylamide. Xaa is preferably Glu or Asp but may be other amino acids, including Leu, Met, His, Cys and Gln.. In terms of biological role, probably plays an important role in intracellular peptide degradation. This chain is Peptidase B, found in Photorhabdus laumondii subsp. laumondii (strain DSM 15139 / CIP 105565 / TT01) (Photorhabdus luminescens subsp. laumondii).